Reading from the N-terminus, the 622-residue chain is Threonine--tRNA ligase (622 aa).

The segment at M1–K134 is editing domain. The interval P199 to P498 is catalytic. C291, H343, and H467 together coordinate Zn(2+).

Belongs to the class-II aminoacyl-tRNA synthetase family. As to quaternary structure, homodimer. It depends on Zn(2+) as a cofactor.

It is found in the cytoplasm. It carries out the reaction tRNA(Thr) + L-threonine + ATP = L-threonyl-tRNA(Thr) + AMP + diphosphate + H(+). Catalyzes the attachment of threonine to tRNA(Thr) in a two-step reaction: L-threonine is first activated by ATP to form Thr-AMP and then transferred to the acceptor end of tRNA(Thr). Also edits incorrectly charged L-seryl-tRNA(Thr). In Methanococcus vannielii (strain ATCC 35089 / DSM 1224 / JCM 13029 / OCM 148 / SB), this protein is Threonine--tRNA ligase.